The following is a 453-amino-acid chain: uncharacterized protein (453 aa).

Disordered regions lie at residues 140 to 161 (YGES…TRPQ) and 311 to 332 (TTTR…SASS).

This is an uncharacterized protein from Caenorhabditis elegans.